The sequence spans 136 residues: Large ribosomal subunit protein bL17 (136 aa).

This sequence belongs to the bacterial ribosomal protein bL17 family. As to quaternary structure, part of the 50S ribosomal subunit. Contacts protein L32.

The sequence is that of Large ribosomal subunit protein bL17 from Rickettsia prowazekii (strain Madrid E).